A 307-amino-acid chain; its full sequence is Major pollen allergen Lol p 5a (307 aa).

An N-terminal signal peptide occupies residues 1 to 25 (MAVQKYTVALFLAVALVAGPAASYA).

This sequence belongs to the Poa p IX/Phl p VI allergen family. As to expression, pollen, starch granules.

The chain is Major pollen allergen Lol p 5a (LOLPIB) from Lolium perenne (Perennial ryegrass).